The primary structure comprises 239 residues: Pyridoxine 5'-phosphate synthase (239 aa).

Asparagine 7 contributes to the 3-amino-2-oxopropyl phosphate binding site. 9–10 is a 1-deoxy-D-xylulose 5-phosphate binding site; sequence DH. A 3-amino-2-oxopropyl phosphate-binding site is contributed by arginine 18. Histidine 43 serves as the catalytic Proton acceptor. Residues arginine 45 and histidine 50 each contribute to the 1-deoxy-D-xylulose 5-phosphate site. The active-site Proton acceptor is the glutamate 70. Threonine 100 contacts 1-deoxy-D-xylulose 5-phosphate. Residue histidine 191 is the Proton donor of the active site. Residues glycine 192 and 213 to 214 contribute to the 3-amino-2-oxopropyl phosphate site; that span reads GH.

It belongs to the PNP synthase family. As to quaternary structure, homooctamer; tetramer of dimers.

It is found in the cytoplasm. The enzyme catalyses 3-amino-2-oxopropyl phosphate + 1-deoxy-D-xylulose 5-phosphate = pyridoxine 5'-phosphate + phosphate + 2 H2O + H(+). Its pathway is cofactor biosynthesis; pyridoxine 5'-phosphate biosynthesis; pyridoxine 5'-phosphate from D-erythrose 4-phosphate: step 5/5. Its function is as follows. Catalyzes the complicated ring closure reaction between the two acyclic compounds 1-deoxy-D-xylulose-5-phosphate (DXP) and 3-amino-2-oxopropyl phosphate (1-amino-acetone-3-phosphate or AAP) to form pyridoxine 5'-phosphate (PNP) and inorganic phosphate. This is Pyridoxine 5'-phosphate synthase from Geobacter sulfurreducens (strain ATCC 51573 / DSM 12127 / PCA).